Consider the following 511-residue polypeptide: Ribose import ATP-binding protein RbsA (511 aa).

ABC transporter domains lie at 13–249 (VSMD…VGRA) and 260–503 (ALGE…AGIA). ATP is bound at residue 45-52 (GENGAGKS).

This sequence belongs to the ABC transporter superfamily. Ribose importer (TC 3.A.1.2.1) family. The complex is composed of an ATP-binding protein (RbsA), two transmembrane proteins (RbsC) and a solute-binding protein (RbsB).

It is found in the cell inner membrane. The catalysed reaction is D-ribose(out) + ATP + H2O = D-ribose(in) + ADP + phosphate + H(+). Part of the ABC transporter complex RbsABC involved in ribose import. Responsible for energy coupling to the transport system. The polypeptide is Ribose import ATP-binding protein RbsA (Roseobacter denitrificans (strain ATCC 33942 / OCh 114) (Erythrobacter sp. (strain OCh 114))).